A 228-amino-acid polypeptide reads, in one-letter code: Ribonuclease S-1 (228 aa).

The signal sequence occupies residues 1–27; it reads MGVTGMTYMFTMVFSLIVLILSSSTVG. Gln-36 serves as a coordination point for RNA. Cys-42 and Cys-49 are oxidised to a cystine. His-60 is a binding site for RNA. Residue His-60 is the Proton donor of the active site. Cys-75 and Cys-119 are joined by a disulfide. An N-linked (GlcNAc...) asparagine glycan is attached at Asn-87. Residue 98-99 participates in RNA binding; the sequence is NV. Asn-101 carries N-linked (GlcNAc...) asparagine glycosylation. RNA is bound by residues Phe-108, 111-112, and 115-116; these read KE and KH. Glu-112 is an active-site residue. His-116 acts as the Proton acceptor in catalysis. Asn-144, Asn-157, and Asn-175 each carry an N-linked (GlcNAc...) asparagine glycan. Intrachain disulfides connect Cys-183/Cys-222 and Cys-199/Cys-210.

Belongs to the RNase T2 family. Post-translationally, N-linked core structure at Asn-87 and Asn-101 contains xylose and fucose or consists of disaccharide (GlcNAc-GlcNAc). N-linked core structure at Asn-144 contains xylose.

The enzyme catalyses a ribonucleotidyl-ribonucleotide-RNA + H2O = a 3'-end 3'-phospho-ribonucleotide-RNA + a 5'-end dephospho-ribonucleoside-RNA + H(+). In terms of biological role, self-incompatibility (SI) is the inherited ability of a flowering plant to prevent self-fertilization by discriminating between self and non-self pollen during pollination. In many species, self-incompatibility is controlled by the single, multiallelic locus S. The sequence is that of Ribonuclease S-1 from Pyrus pyrifolia (Chinese pear).